The primary structure comprises 141 residues: MLDILEIMKRIPHRYPFLLVDRILEMDKEAQIIKGKKNVTMNEEFFNGHFPGHPIMPGVLIIEGMAQCLGVMVMENFPGKVPYFAAIENAKFKNPVKPGDTLIYDVKVDKVKRNFVKATGKTYVDDAVVAEASFTFVIADM.

His49 is a catalytic residue.

This sequence belongs to the thioester dehydratase family. FabZ subfamily.

It is found in the cytoplasm. The enzyme catalyses a (3R)-hydroxyacyl-[ACP] = a (2E)-enoyl-[ACP] + H2O. Involved in unsaturated fatty acids biosynthesis. Catalyzes the dehydration of short chain beta-hydroxyacyl-ACPs and long chain saturated and unsaturated beta-hydroxyacyl-ACPs. This Fusobacterium nucleatum subsp. nucleatum (strain ATCC 25586 / DSM 15643 / BCRC 10681 / CIP 101130 / JCM 8532 / KCTC 2640 / LMG 13131 / VPI 4355) protein is 3-hydroxyacyl-[acyl-carrier-protein] dehydratase FabZ.